A 500-amino-acid polypeptide reads, in one-letter code: Cysteine-rich secretory protein LCCL domain-containing 1 (500 aa).

The first 23 residues, 1-23, serve as a signal peptide directing secretion; it reads MMCKAQEWLRVTALLFVARAVPA. An SCP domain is found at 66–206; the sequence is LDLHNKLRSQ…PKAVYLVCNY (141 aa). Residues 258-281 are disordered; the sequence is EIERQQSQVHDTHVRTRSDDSDRN. LCCL domains lie at 289 to 384 and 390 to 492; these read MSQI…ANSF and TVQA…TGGK. Cystine bridges form between Cys-295–Cys-313, Cys-317–Cys-337, Cys-396–Cys-418, and Cys-422–Cys-445.

The protein belongs to the CRISP family.

The protein localises to the secreted. In Mus musculus (Mouse), this protein is Cysteine-rich secretory protein LCCL domain-containing 1 (Crispld1).